The chain runs to 610 residues: UvrABC system protein C (610 aa).

Residues 13–91 enclose the GIY-YIG domain; it reads HLPGVYRMYD…IKENQPKYNV (79 aa). The region spanning 201–236 is the UVR domain; the sequence is GQVIEHLVQKMENAAQELDFEAAARFRDQIQSVRAV.

It belongs to the UvrC family. As to quaternary structure, interacts with UvrB in an incision complex.

It localises to the cytoplasm. Its function is as follows. The UvrABC repair system catalyzes the recognition and processing of DNA lesions. UvrC both incises the 5' and 3' sides of the lesion. The N-terminal half is responsible for the 3' incision and the C-terminal half is responsible for the 5' incision. In Actinobacillus pleuropneumoniae serotype 3 (strain JL03), this protein is UvrABC system protein C.